The following is a 230-amino-acid chain: MTSKIIVALDFEKEAEALALVDQIDPSLCRLKVGKEMFTTLGINFVKQLHQRNFDVFLDLKYHDIPNTVARAVRSAADLGVWMVDLHASGGLRMMEDAKKILEPYGKDAPLLIAVTVLTSMEDLDLLQIGINASPMEQVLRLAHLTQRAGLDGVVCSPQEVEILRNACGEDFKLVTPGIRPIGTDFGDQRRVMTPTAAIRAGSDYLVIGRPITQADNPAEVLRSINVSIG.

Substrate is bound by residues Asp10, Lys32, 59 to 68, Thr119, Arg180, Gln189, Gly209, and Arg210; that span reads DLKYHDIPNT. Lys61 functions as the Proton donor in the catalytic mechanism.

The protein belongs to the OMP decarboxylase family. Type 1 subfamily. As to quaternary structure, homodimer.

The catalysed reaction is orotidine 5'-phosphate + H(+) = UMP + CO2. It functions in the pathway pyrimidine metabolism; UMP biosynthesis via de novo pathway; UMP from orotate: step 2/2. Catalyzes the decarboxylation of orotidine 5'-monophosphate (OMP) to uridine 5'-monophosphate (UMP). The chain is Orotidine 5'-phosphate decarboxylase from Haemophilus influenzae (strain ATCC 51907 / DSM 11121 / KW20 / Rd).